Consider the following 1297-residue polypeptide: Protein ENHANCED DOWNY MILDEW 2 (1297 aa).

The PHD-type 1; degenerate zinc-finger motif lies at 222-281 (ESVCAICDNGGEILCCEGSCLRSFHATKKDGEDSLCDSLGFNKMQVEAIQKYFCPNCEHK). Zn(2+) is bound by residues Cys-237, Cys-241, Cys-275, Cys-278, Cys-285, Cys-288, Cys-306, Cys-311, His-316, Cys-319, Cys-346, and His-349. Residues 282-352 (IHQCFICKNL…EYTCPLHKCS (71 aa)) form a PHD-type 2; atypical zinc finger. A PHD-type 3; degenerate zinc finger spans residues 351–417 (CSVCENGEVK…RVLIYCQEHE (67 aa)). The Nuclear localization signal 1 signature appears at 445–452 (QRRILESH). Disordered regions lie at residues 471-547 (CGKA…ARDA) and 562-598 (TQEP…IPTL). The segment covering 475 to 487 (SKNSFRSSFPSSK) has biased composition (low complexity). The Nuclear localization signal 2 signature appears at 492 to 499 (TKKHGLVS). Residues 526–547 (KMMEDSREAGKNKLGVKEARDA) are compositionally biased toward basic and acidic residues. 2 consecutive short sequence motifs (nuclear localization signal) follow at residues 610–617 (MKKATEEI) and 979–986 (LKKEGKTK). Basic and acidic residues-rich tracts occupy residues 969–990 (QSDH…DYSG) and 1096–1109 (EVSR…RTSR). 3 disordered regions span residues 969–1017 (QSDH…GELS), 1085–1109 (HGCK…RTSR), and 1260–1297 (FPLP…WIND).

As to quaternary structure, interacts with WNK8 in nucleus; this interaction is involved in developmental processes regulation but not in RPP7-dependent disease resistance. Interacts with EML1 and EML2 in nucleus. Component of the ASI1-AIPP1-EDM2 (AAE) RNA regulatory complex composed of at least AIPP1/EDM3, ASI1 and EDM2 and may contain CPL2, AIPP2 and AIPP3/BDT1. Binds directly to AIPP1/EDM3. Co-associates with AIPP1/EDM3 to histone H3 lysine 9 dimethylation (H3K9me2)-marked chromatin and transcripts at a critical proximal polyadenylation site of RPP7 to hamper proximal transcript polyadeylation/termination. Post-translationally, phosphorylated by WNK8.

The protein resides in the nucleus. Its function is as follows. Cellular antisilencing factor and regulator of genome DNA methylation patterns involved in the regulation of chromatin states. Together with SUVH4, monitors repressive epigenetic marks H3K27me1, H3K9me2, and prevents DNA-methylation at CHG sites, affecting especially the expression of transposons and developmentally important genes. Collaboratively with ASI1 and AIPP1/EDM3, the AAE complex regulates alternative RNA processing (e.g. alternative splicing) and epigenetic silencing (e.g. H3K9me2) of intronic heterochromatin-containing genes as well as genic heterochromatin-containing genes by promoting distal 3' polyadenylation. Epigenetic reader that binds DNA and contributes to transcriptional transposable element (TE) silencing by modulating levels of the repressive post-translational histone modifications (PHM) H3K9me2. In cv. Columbia, required for RPP7-dependent disease resistance against the Hyaloperonospora arabidopsidis isolate Hiks1, by promoting levels of RPP7 via alternative polyadenylation (APA), resulting from cooption of epigenetic information at the TE insertion locus COPIA-R7. Exhibits a global role in NLR (nucleotide-binding, leucine-rich repeat) defense genes epigenetic (e.g. H3K9me2 hallmarks) expression control; promotes the accumulation of RPP7, RPP4 and some other proteins, but mediates the repression of several other NLR products, probably to compensate for fitness penalties caused by defense mechanisms. Regulates development processes such as the formation of leaf pavement cells, leaf expansion, fertility and flowering. Prevents FLC accumulation to control flowering. Modulates stomatal development by regulating the methylation-mediated silencing of ERECTA receptor genes (e.g. ER, ERL1 and ERL2) and preventing cell divisions. The polypeptide is Protein ENHANCED DOWNY MILDEW 2 (Arabidopsis thaliana (Mouse-ear cress)).